Reading from the N-terminus, the 661-residue chain is Ubiquitin-associated and SH3 domain-containing protein A (661 aa).

The region spanning 15–60 (KLKSRSSPSLLEPLLAMGFPVHTALKALAATGRKTAEEALAWLHDH) is the UBA domain. One can recognise an SH3 domain in the interval 276–341 (VHYQTLRALF…PENYTDRASE (66 aa)). The segment at 395 to 661 (RKSVLVVRHG…FNWRNWISGN (267 aa)) is phosphatase-like.

In terms of assembly, homodimer or homooligomer. Interacts with CBL. Part of a complex containing CBL and activated EGFR. Interacts with ubiquitin and with mono-ubiquitinated proteins. Interacts with dynamin. In terms of tissue distribution, highest expression of UBASH3A in tissues belonging to the immune system, including spleen, peripheral blood leukocytes, thymus and bone marrow.

It localises to the cytoplasm. The protein resides in the nucleus. Interferes with CBL-mediated down-regulation and degradation of receptor-type tyrosine kinases. Promotes accumulation of activated target receptors, such as T-cell receptors, EGFR and PDGFRB, on the cell surface. Exhibits negligible protein tyrosine phosphatase activity at neutral pH. May act as a dominant-negative regulator of UBASH3B-dependent dephosphorylation. May inhibit dynamin-dependent endocytic pathways by functionally sequestering dynamin via its SH3 domain. This chain is Ubiquitin-associated and SH3 domain-containing protein A (UBASH3A), found in Homo sapiens (Human).